The chain runs to 156 residues: Endoribonuclease YbeY (156 aa).

Zn(2+) contacts are provided by histidine 115, histidine 119, and histidine 125.

It belongs to the endoribonuclease YbeY family. The cofactor is Zn(2+).

It localises to the cytoplasm. Single strand-specific metallo-endoribonuclease involved in late-stage 70S ribosome quality control and in maturation of the 3' terminus of the 16S rRNA. This Mannheimia succiniciproducens (strain KCTC 0769BP / MBEL55E) protein is Endoribonuclease YbeY.